A 265-amino-acid chain; its full sequence is UPF0026 protein slr1464 (265 aa).

Residues 16-252 (RYGRSLGIDP…QNLAKKISGA (237 aa)) enclose the Radical SAM core domain. [4Fe-4S] cluster contacts are provided by cysteine 32, cysteine 36, and cysteine 39. The tract at residues 204–230 (RPTRPKPLQRELEGRGNHTGTPYGDRP) is disordered.

It belongs to the UPF0026 family. The cofactor is [4Fe-4S] cluster.

The protein is UPF0026 protein slr1464 of Synechocystis sp. (strain ATCC 27184 / PCC 6803 / Kazusa).